We begin with the raw amino-acid sequence, 180 residues long: DNA-directed RNA polymerase subunit omega (180 aa).

Residues 100-180 form a disordered region; that stretch reads ISKSGTPILP…NSDDSETTNS (81 aa). Composition is skewed to acidic residues over residues 137 to 151 and 159 to 180; these read EVDVDAELEVGDEET and AEAETEAETTEVNSDDSETTNS.

It belongs to the RNA polymerase subunit omega family. As to quaternary structure, the RNAP catalytic core consists of 2 alpha, 1 beta, 1 beta' and 1 omega subunit. When a sigma factor is associated with the core the holoenzyme is formed, which can initiate transcription.

The catalysed reaction is RNA(n) + a ribonucleoside 5'-triphosphate = RNA(n+1) + diphosphate. Promotes RNA polymerase assembly. Latches the N- and C-terminal regions of the beta' subunit thereby facilitating its interaction with the beta and alpha subunits. The chain is DNA-directed RNA polymerase subunit omega from Pelagibacter ubique (strain HTCC1062).